We begin with the raw amino-acid sequence, 97 residues long: Large ribosomal subunit protein bL28 (97 aa).

Belongs to the bacterial ribosomal protein bL28 family.

The sequence is that of Large ribosomal subunit protein bL28 from Brucella ovis (strain ATCC 25840 / 63/290 / NCTC 10512).